Here is a 603-residue protein sequence, read N- to C-terminus: UvrABC system protein C (603 aa).

Residues 15-92 (DQPGCYLMKN…IQKHQPYYNI (78 aa)) enclose the GIY-YIG domain. The region spanning 197–232 (AQVKKQLTARMERAAGQLEFERAAEIRDQLHYIEVT) is the UVR domain.

It belongs to the UvrC family. As to quaternary structure, interacts with UvrB in an incision complex.

It localises to the cytoplasm. Its function is as follows. The UvrABC repair system catalyzes the recognition and processing of DNA lesions. UvrC both incises the 5' and 3' sides of the lesion. The N-terminal half is responsible for the 3' incision and the C-terminal half is responsible for the 5' incision. The chain is UvrABC system protein C from Limosilactobacillus fermentum (strain NBRC 3956 / LMG 18251) (Lactobacillus fermentum).